A 351-amino-acid polypeptide reads, in one-letter code: Anthranilate phosphoribosyltransferase (351 aa).

5-phospho-alpha-D-ribose 1-diphosphate-binding positions include Gly80, 83–84, Thr88, 90–93, 108–116, and Ser120; these read GD, NVST, and KHGNRSVTS. Residue Gly80 coordinates anthranilate. Ser92 is a binding site for Mg(2+). Asn111 provides a ligand contact to anthranilate. An anthranilate-binding site is contributed by Arg166. Residues Asp229 and Glu230 each coordinate Mg(2+).

It belongs to the anthranilate phosphoribosyltransferase family. In terms of assembly, homodimer. The cofactor is Mg(2+).

The enzyme catalyses N-(5-phospho-beta-D-ribosyl)anthranilate + diphosphate = 5-phospho-alpha-D-ribose 1-diphosphate + anthranilate. It functions in the pathway amino-acid biosynthesis; L-tryptophan biosynthesis; L-tryptophan from chorismate: step 2/5. Its function is as follows. Catalyzes the transfer of the phosphoribosyl group of 5-phosphorylribose-1-pyrophosphate (PRPP) to anthranilate to yield N-(5'-phosphoribosyl)-anthranilate (PRA). The polypeptide is Anthranilate phosphoribosyltransferase (Prosthecochloris aestuarii (strain DSM 271 / SK 413)).